We begin with the raw amino-acid sequence, 768 residues long: Tripartite motif-containing protein 67 (768 aa).

Residues 7–42 (CPVCGSLFREPIILPCSHNVCLPCARTIAVQTPDGE) form an RING-type; degenerate zinc finger. Residues 55 to 70 (AAAAATPPDQDAAAGA) are compositionally biased toward low complexity. Disordered regions lie at residues 55–74 (AAAAATPPDQDAAAGATSGG) and 247–284 (QPPPPPTPPEATPAVTGTSTASSAGGCRSPGGAGASAP). The segment at 201–248 (AICQLCDRTPPEPAATLCEQCDVLYCATCQLKCHPSRGPFAKHRLVQP) adopts a B box-type 1; degenerate zinc-finger fold. The span at 247–257 (QPPPPPTPPEA) shows a compositional bias: pro residues. The segment at 285-327 (RKFPTCPEHEMENYSMYCVSCRSPVCYMCLEEGRHSKHEVKPL) adopts a B box-type 2 zinc-finger fold. 4 residues coordinate Zn(2+): cysteine 290, histidine 293, cysteine 313, and histidine 319. A coiled-coil region spans residues 332–369 (KQHKAQLSQALNGVSDKAKEAKEFLVQLKNILQQIQEN). Residues 435-493 (IKEDDPSGFLQISDALIKRVQTSQEQWVKGALEPKVSAEFDLTLDSEPLLQAIHQLDFV) form the COS domain. Residues 498-592 (PPVPLLQLEK…KTVVLQTSDV (95 aa)) enclose the Fibronectin type-III domain. The B30.2/SPRY domain occupies 574–765 (NSSGVGPYSK…VPTNLGRPKL (192 aa)).

It localises to the cytoplasm. The protein localises to the cytoskeleton. The chain is Tripartite motif-containing protein 67 (Trim67) from Mus musculus (Mouse).